A 450-amino-acid chain; its full sequence is Tubulin alpha-3 chain (450 aa).

GTP is bound by residues Gln11, Glu71, Gly144, Thr145, Thr179, Asn206, and Asn228. Position 71 (Glu71) interacts with Mg(2+). Residue Glu254 is part of the active site.

Belongs to the tubulin family. As to quaternary structure, dimer of alpha and beta chains. A typical microtubule is a hollow water-filled tube with an outer diameter of 25 nm and an inner diameter of 15 nM. Alpha-beta heterodimers associate head-to-tail to form protofilaments running lengthwise along the microtubule wall with the beta-tubulin subunit facing the microtubule plus end conferring a structural polarity. Microtubules usually have 13 protofilaments but different protofilament numbers can be found in some organisms and specialized cells. Requires Mg(2+) as cofactor. Post-translationally, undergoes a tyrosination/detyrosination cycle, the cyclic removal and re-addition of a C-terminal tyrosine residue by the enzymes tubulin tyrosine carboxypeptidase (TTCP) and tubulin tyrosine ligase (TTL), respectively.

It localises to the cytoplasm. The protein resides in the cytoskeleton. It carries out the reaction GTP + H2O = GDP + phosphate + H(+). Tubulin is the major constituent of microtubules, a cylinder consisting of laterally associated linear protofilaments composed of alpha- and beta-tubulin heterodimers. Microtubules grow by the addition of GTP-tubulin dimers to the microtubule end, where a stabilizing cap forms. Below the cap, tubulin dimers are in GDP-bound state, owing to GTPase activity of alpha-tubulin. This chain is Tubulin alpha-3 chain (TUBA3), found in Eleusine indica (Goosegrass).